Reading from the N-terminus, the 205-residue chain is Glycerol-3-phosphate acyltransferase (205 aa).

5 helical membrane-spanning segments follow: residues 4–24 (IAPGLVLLAYLCGSISSAILV), 80–100 (PFWLGLVAIAACVGHIWPVFF), 107–127 (GVATAFGAIAPIGLDLTGVMA), 130–150 (WLLTILLSGYSSLGAIVSALI), and 155–175 (VWWFKPQYTFPVSMLSCLILL).

The protein belongs to the PlsY family. As to quaternary structure, probably interacts with PlsX.

The protein resides in the cell inner membrane. The catalysed reaction is an acyl phosphate + sn-glycerol 3-phosphate = a 1-acyl-sn-glycero-3-phosphate + phosphate. Its pathway is lipid metabolism; phospholipid metabolism. Functionally, catalyzes the transfer of an acyl group from acyl-phosphate (acyl-PO(4)) to glycerol-3-phosphate (G3P) to form lysophosphatidic acid (LPA). This enzyme utilizes acyl-phosphate as fatty acyl donor, but not acyl-CoA or acyl-ACP. This chain is Glycerol-3-phosphate acyltransferase, found in Klebsiella pneumoniae (strain 342).